The chain runs to 546 residues: Cytochrome P450 monooxygenase alnH (546 aa).

Residues valine 11–isoleucine 31 traverse the membrane as a helical segment. N-linked (GlcNAc...) asparagine glycosylation is found at asparagine 146, asparagine 258, and asparagine 425. Heme is bound at residue cysteine 445.

It belongs to the cytochrome P450 family. Heme is required as a cofactor.

It is found in the membrane. The protein operates within polyketide biosynthesis. In terms of biological role, cytochrome P450 monooxygenase; part of the gene cluster that mediates the biosynthesis of asperlin, a polyketide showing anti-inflammatory, antitumor and antibiotic activities. The first step of the asperlin biosynthesis is the production of the intermediate 2,4,6-octatrienoic acid by the highly redusing polyketide synthase alnA with cleavage of the PKS product by the esterase alnB. 2,4,6-octatrienoic acid is further converted to asperlin via several steps involving the remaining enzymes from the cluster. The polypeptide is Cytochrome P450 monooxygenase alnH (Emericella nidulans (strain FGSC A4 / ATCC 38163 / CBS 112.46 / NRRL 194 / M139) (Aspergillus nidulans)).